Here is a 178-residue protein sequence, read N- to C-terminus: Large ribosomal subunit protein uL6 (178 aa).

It belongs to the universal ribosomal protein uL6 family. In terms of assembly, part of the 50S ribosomal subunit.

Its function is as follows. This protein binds to the 23S rRNA, and is important in its secondary structure. It is located near the subunit interface in the base of the L7/L12 stalk, and near the tRNA binding site of the peptidyltransferase center. This chain is Large ribosomal subunit protein uL6, found in Listeria monocytogenes serotype 4a (strain HCC23).